Here is a 729-residue protein sequence, read N- to C-terminus: Catalase-peroxidase (729 aa).

Positions 1-26 are disordered; it reads MTMDQKTDNAGKCPVAHTAPRGRSNR. Positions 97–219 form a cross-link, tryptophyl-tyrosyl-methioninium (Trp-Tyr) (with M-245); the sequence is WHSAGTYRIT…LAAVQMGLIY (123 aa). Residue histidine 98 is the Proton acceptor of the active site. A cross-link (tryptophyl-tyrosyl-methioninium (Tyr-Met) (with W-97)) is located at residues 219–245; the sequence is YVNPEGPNGNPDPVAAAHDIRETFARM. Histidine 260 is a heme b binding site.

This sequence belongs to the peroxidase family. Peroxidase/catalase subfamily. Homodimer or homotetramer. Heme b is required as a cofactor. In terms of processing, formation of the three residue Trp-Tyr-Met cross-link is important for the catalase, but not the peroxidase activity of the enzyme.

The enzyme catalyses H2O2 + AH2 = A + 2 H2O. It catalyses the reaction 2 H2O2 = O2 + 2 H2O. In terms of biological role, bifunctional enzyme with both catalase and broad-spectrum peroxidase activity. The chain is Catalase-peroxidase from Sinorhizobium medicae (strain WSM419) (Ensifer medicae).